A 445-amino-acid chain; its full sequence is Proline--tRNA ligase (445 aa).

This sequence belongs to the class-II aminoacyl-tRNA synthetase family. ProS type 2 subfamily. As to quaternary structure, homodimer.

The protein localises to the cytoplasm. It catalyses the reaction tRNA(Pro) + L-proline + ATP = L-prolyl-tRNA(Pro) + AMP + diphosphate. Its function is as follows. Catalyzes the attachment of proline to tRNA(Pro) in a two-step reaction: proline is first activated by ATP to form Pro-AMP and then transferred to the acceptor end of tRNA(Pro). This is Proline--tRNA ligase from Dinoroseobacter shibae (strain DSM 16493 / NCIMB 14021 / DFL 12).